Here is a 466-residue protein sequence, read N- to C-terminus: Asparagine--tRNA ligase (466 aa).

The protein belongs to the class-II aminoacyl-tRNA synthetase family. As to quaternary structure, homodimer.

It is found in the cytoplasm. The enzyme catalyses tRNA(Asn) + L-asparagine + ATP = L-asparaginyl-tRNA(Asn) + AMP + diphosphate + H(+). The polypeptide is Asparagine--tRNA ligase (Aliivibrio fischeri (strain ATCC 700601 / ES114) (Vibrio fischeri)).